We begin with the raw amino-acid sequence, 69 residues long: UPF0337 protein RB0906 (69 aa).

This sequence belongs to the UPF0337 (CsbD) family.

The chain is UPF0337 protein RB0906 from Rhizobium meliloti (strain 1021) (Ensifer meliloti).